A 120-amino-acid polypeptide reads, in one-letter code: UPF0102 protein CBU_1742 (120 aa).

It belongs to the UPF0102 family.

This is UPF0102 protein CBU_1742 from Coxiella burnetii (strain RSA 493 / Nine Mile phase I).